The sequence spans 527 residues: MTTQAAEVAKRRTFAIISHPDAGKTTITEKLLLMGKAIAVAGTVKSRKSDRHATSDWMEMEKQRGISITTSVMQFPYREHMINLLDTPGHEDFSEDTYRTLTAVDSALMVLDGGKGVEPRTIALMDVCRLRDTPIVSFINKLDRDIRDPIELLDEIEAVLKIKAAPITWPIGCYRDFKGVYHLAEDRIIVFVPGHGHERIETRVIEKLDSDEARAHLGDMYDDFVEQLELVQGACHEFDKDAFLRGEMTPVFFGTALGNFGVDHVLDAVVDWAPKPLARVANERTVEPAEEKFTGFVFKIQANMDPKHRDRIAFMRICSGKYEKGMKMRHVRIKKDLKIADALTFFSSEREMLEEAWAGDIIGLHNHGTIQIGDTFTEGEVLGFTGIPHFAPELFRRVRLKDPLKSKQLRQGLQELAEEGATQVFFPERNNDIILGAVGVLQFDVVASRLKEEYKVECAYEAINVWSARWIECSDEKKLKEFKDKAYENLAVDGGGHLTYLAPTRVNLSLMEERWPEVKFRATREHH.

The region spanning 9–277 (AKRRTFAIIS…AVVDWAPKPL (269 aa)) is the tr-type G domain. Residues 18–25 (SHPDAGKT), 86–90 (DTPGH), and 140–143 (NKLD) each bind GTP.

This sequence belongs to the TRAFAC class translation factor GTPase superfamily. Classic translation factor GTPase family. PrfC subfamily.

The protein resides in the cytoplasm. Its function is as follows. Increases the formation of ribosomal termination complexes and stimulates activities of RF-1 and RF-2. It binds guanine nucleotides and has strong preference for UGA stop codons. It may interact directly with the ribosome. The stimulation of RF-1 and RF-2 is significantly reduced by GTP and GDP, but not by GMP. This Stutzerimonas stutzeri (strain A1501) (Pseudomonas stutzeri) protein is Peptide chain release factor 3.